The chain runs to 564 residues: Pachytene checkpoint protein 2 (564 aa).

314–321 provides a ligand contact to ATP; sequence GPPGTGKT.

This sequence belongs to the AAA ATPase family. PCH2 subfamily.

It is found in the nucleus. The protein resides in the nucleolus. It localises to the chromosome. Its function is as follows. Required for the pachytene checkpoint, the meiotic checkpoint that prevents chromosome segregation when defects in recombination and synaptonemal complex formation occurred. Represses meiotic recombination in the rDNA, probably by excluding the meiosis-specific protein HOP1 from the nucleolar region. In Saccharomyces cerevisiae (strain ATCC 204508 / S288c) (Baker's yeast), this protein is Pachytene checkpoint protein 2 (PCH2).